The primary structure comprises 190 residues: Large ribosomal subunit protein uL22 (190 aa).

The segment at 111–190 is disordered; sequence SVQSTKAKAK…TKKKTEGEEK (80 aa). Positions 125-147 are enriched in basic and acidic residues; sequence IKSEDSKNSLKVTESKADSKVDA. Over residues 167–178 the composition is skewed to low complexity; it reads AKVATTKSTATR.

Belongs to the universal ribosomal protein uL22 family. In terms of assembly, part of the 50S ribosomal subunit.

Its function is as follows. This protein binds specifically to 23S rRNA; its binding is stimulated by other ribosomal proteins, e.g. L4, L17, and L20. It is important during the early stages of 50S assembly. It makes multiple contacts with different domains of the 23S rRNA in the assembled 50S subunit and ribosome. In terms of biological role, the globular domain of the protein is located near the polypeptide exit tunnel on the outside of the subunit, while an extended beta-hairpin is found that lines the wall of the exit tunnel in the center of the 70S ribosome. This is Large ribosomal subunit protein uL22 from Helicobacter hepaticus (strain ATCC 51449 / 3B1).